Consider the following 327-residue polypeptide: Probable NAD(P)H-dependent D-xylose reductase xyl1 (327 aa).

Tyr57 serves as the catalytic Proton donor. His119 contacts substrate. NAD(+) contacts are provided by residues 173–174 (SN), 222–231 (SSLGPQSFIE), and 278–288 (KSNNPDRLAQN).

It belongs to the aldo/keto reductase family.

It carries out the reaction xylitol + NAD(+) = D-xylose + NADH + H(+). It catalyses the reaction xylitol + NADP(+) = D-xylose + NADPH + H(+). It functions in the pathway carbohydrate metabolism; D-xylose degradation. Functionally, catalyzes the initial reaction in the xylose utilization pathway by reducing D-xylose into xylitol. Xylose is a major component of hemicelluloses such as xylan. Most fungi utilize D-xylose via three enzymatic reactions, xylose reductase (XR), xylitol dehydrogenase (XDH), and xylulokinase, to form xylulose 5-phosphate, which enters pentose phosphate pathway. In Arthroderma otae (strain ATCC MYA-4605 / CBS 113480) (Microsporum canis), this protein is Probable NAD(P)H-dependent D-xylose reductase xyl1 (xyl1).